Here is a 229-residue protein sequence, read N- to C-terminus: Octanoyltransferase (229 aa).

A BPL/LPL catalytic domain is found at 30 to 223; it reads PDTPDTIWLV…QLQQRAQAHP (194 aa). Substrate-binding positions include 69 to 76, 141 to 143, and 154 to 156; these read RGGQITYH, ALG, and GVS. The active-site Acyl-thioester intermediate is the Cys-172.

The protein belongs to the LipB family.

Its subcellular location is the cytoplasm. The catalysed reaction is octanoyl-[ACP] + L-lysyl-[protein] = N(6)-octanoyl-L-lysyl-[protein] + holo-[ACP] + H(+). Its pathway is protein modification; protein lipoylation via endogenous pathway; protein N(6)-(lipoyl)lysine from octanoyl-[acyl-carrier-protein]: step 1/2. Functionally, catalyzes the transfer of endogenously produced octanoic acid from octanoyl-acyl-carrier-protein onto the lipoyl domains of lipoate-dependent enzymes. Lipoyl-ACP can also act as a substrate although octanoyl-ACP is likely to be the physiological substrate. In Ralstonia pickettii (strain 12J), this protein is Octanoyltransferase.